The primary structure comprises 279 residues: Probable phosphatase phospho1 (279 aa).

The active-site Nucleophile is the Asp-41. Mg(2+) is bound by residues Asp-41 and Asp-43. Asp-43 (proton donor) is an active-site residue. Residues Asp-52 and Asp-133 each coordinate substrate. Asp-215 is a Mg(2+) binding site.

It belongs to the HAD-like hydrolase superfamily. PHOSPHO family. Mg(2+) is required as a cofactor.

The protein resides in the extracellular vesicle. It catalyses the reaction phosphoethanolamine + H2O = ethanolamine + phosphate. It carries out the reaction phosphocholine + H2O = choline + phosphate. Its function is as follows. Phosphatase that has a high activity toward phosphoethanolamine (PEA) and phosphocholine (PCho). Involved in the generation of inorganic phosphate for bone mineralization. In Danio rerio (Zebrafish), this protein is Probable phosphatase phospho1 (phospho1).